Reading from the N-terminus, the 638-residue chain is MKLRKAWLLVLLLALTQLLAAASAGDAHEDTSDTENATEEEEEEDDDDLEVKEENGVWVLNDGNFDNFVADKDTVLLEFYAPWCGHCKQFAPEYEKIASTLKDNDPPIAVAKIDATSASMLASKFDVSGYPTIKILKKGQAVDYDGSRTQEEIVAKVREVSQPDWTPPPEVTLSLTKDNFDDVVNNADIILVEFYAPWCGHCKKLAPEYEKAAKELSKRSPPIPLAKVDATEQTDLAKRFDVSGYPTLKIFRKGRPFDYNGPREKYGIVDYMIEQSGPPSKEILTLKQVQEFLKDGDDVVIIGLFQGDGDPAYLQYQDAANNLREDYKFHHTFSPEIAKFLKVSLGKLVLTHPEKFQSKYEPRFHVMDVQGSTEASAIKDYVVKHALPLVGHRKTSNDAKRYSKRPLVVVYYSVDFSFDYRAATQFWRNKVLEVAKDFPEYTFAIADEEDYATEVKDLGLSESGEDVNAAILDESGKKFAMEPEEFDSDTLREFVTAFKKGKLKPVIKSQPVPKNNKGPVKVVVGKTFDAIVMDPKKDVLIEFYAPWCGHCKQLEPIYTSLGKKYKGQKDLVIAKMDATANDITNDQYKVEGFPTIYFAPSGDKKNPIKFEGGNRDLEHLSKFIDEHATKRSRTKEEL.

The N-terminal stretch at 1–20 is a signal peptide; that stretch reads MKLRKAWLLVLLLALTQLLA. 2 consecutive Thioredoxin domains span residues 21 to 162 and 162 to 294; these read AASA…EVSQ and QPDW…EFLK. The interval 24–50 is disordered; that stretch reads AGDAHEDTSDTENATEEEEEEDDDDLE. Residues 32-50 show a composition bias toward acidic residues; that stretch reads SDTENATEEEEEEDDDDLE. The N-linked (GlcNAc...) asparagine glycan is linked to Asn36. Positions 84–87 match the CXXC motif; it reads CGHC. Intrachain disulfides connect Cys84-Cys87 and Cys199-Cys202. Position 359 is an N6-acetyllysine (Lys359). The Thioredoxin 3 domain occupies 498–629; the sequence is FKKGKLKPVI…LSKFIDEHAT (132 aa). The short motif at 548–551 is the CXXC element; sequence CGHC. Cys548 and Cys551 form a disulfide bridge. The Prevents secretion from ER motif lies at 635–638; the sequence is KEEL.

This sequence belongs to the protein disulfide isomerase family. Part of a large chaperone multiprotein complex comprising DNAJB11, HSP90B1, HSPA5, HYOU, PDIA2, PDIA4, PDIA6, PPIB, SDF2L1, UGGT1 and very small amounts of ERP29, but not, or at very low levels, CALR nor CANX. Component of a complex containing at least CRELD2, MANF, MATN3 and PDIA4.

It localises to the endoplasmic reticulum lumen. The protein resides in the melanosome. The catalysed reaction is Catalyzes the rearrangement of -S-S- bonds in proteins.. The sequence is that of Protein disulfide-isomerase A4 (Pdia4) from Mus musculus (Mouse).